The primary structure comprises 445 residues: Glutamate-1-semialdehyde 2,1-aminomutase (445 aa).

The residue at position 281 (Lys-281) is an N6-(pyridoxal phosphate)lysine.

The protein belongs to the class-III pyridoxal-phosphate-dependent aminotransferase family. HemL subfamily. Homodimer. It depends on pyridoxal 5'-phosphate as a cofactor.

The protein localises to the cytoplasm. The enzyme catalyses (S)-4-amino-5-oxopentanoate = 5-aminolevulinate. It participates in porphyrin-containing compound metabolism; protoporphyrin-IX biosynthesis; 5-aminolevulinate from L-glutamyl-tRNA(Glu): step 2/2. The chain is Glutamate-1-semialdehyde 2,1-aminomutase from Nocardioides sp. (strain ATCC BAA-499 / JS614).